Reading from the N-terminus, the 95-residue chain is Co-chaperonin GroES (95 aa).

This sequence belongs to the GroES chaperonin family. As to quaternary structure, heptamer of 7 subunits arranged in a ring. Interacts with the chaperonin GroEL.

The protein localises to the cytoplasm. Its function is as follows. Together with the chaperonin GroEL, plays an essential role in assisting protein folding. The GroEL-GroES system forms a nano-cage that allows encapsulation of the non-native substrate proteins and provides a physical environment optimized to promote and accelerate protein folding. GroES binds to the apical surface of the GroEL ring, thereby capping the opening of the GroEL channel. This Bordetella bronchiseptica (strain ATCC BAA-588 / NCTC 13252 / RB50) (Alcaligenes bronchisepticus) protein is Co-chaperonin GroES.